Reading from the N-terminus, the 208-residue chain is Small ribosomal subunit protein eS8 (208 aa).

Residues 1–27 (MGISRDNWHKRRRTGGKRKPVHKKRKY) are disordered. Over residues 8-26 (WHKRRRTGGKRKPVHKKRK) the composition is skewed to basic residues.

Belongs to the eukaryotic ribosomal protein eS8 family. As to quaternary structure, component of the small ribosomal subunit. Identified in a IGF2BP1-dependent mRNP granule complex containing untranslated mRNAs. Part of the small subunit (SSU) processome, composed of more than 70 proteins and the RNA chaperone small nucleolar RNA (snoRNA) U3.

It is found in the cytoplasm. The protein localises to the membrane. The protein resides in the nucleus. Its subcellular location is the nucleolus. Its function is as follows. Component of the small ribosomal subunit. The ribosome is a large ribonucleoprotein complex responsible for the synthesis of proteins in the cell. Part of the small subunit (SSU) processome, first precursor of the small eukaryotic ribosomal subunit. During the assembly of the SSU processome in the nucleolus, many ribosome biogenesis factors, an RNA chaperone and ribosomal proteins associate with the nascent pre-rRNA and work in concert to generate RNA folding, modifications, rearrangements and cleavage as well as targeted degradation of pre-ribosomal RNA by the RNA exosome. The polypeptide is Small ribosomal subunit protein eS8 (rps8) (Danio rerio (Zebrafish)).